The following is a 233-amino-acid chain: UPF0758 protein Rcas_0037 (233 aa).

An MPN domain is found at 107–229; sequence QIRSPTDAAQ…FVSMRERGLA (123 aa). His-178, His-180, and Asp-191 together coordinate Zn(2+). Positions 178–191 match the JAMM motif motif; it reads HNHPSGDPTPSPED.

The protein belongs to the UPF0758 family.

The protein is UPF0758 protein Rcas_0037 of Roseiflexus castenholzii (strain DSM 13941 / HLO8).